Reading from the N-terminus, the 169-residue chain is Putative phosphoesterase SAR0985 (169 aa).

Catalysis depends on His-34, which acts as the Proton donor. 2 short sequence motifs (HXTX) span residues 34–37 (HVTI) and 115–118 (HFTI). Residue His-115 is the Proton acceptor of the active site.

This sequence belongs to the 2H phosphoesterase superfamily. YjcG family.

The chain is Putative phosphoesterase SAR0985 from Staphylococcus aureus (strain MRSA252).